Consider the following 129-residue polypeptide: Follitropin subunit beta (129 aa).

The N-terminal stretch at 1–20 (MKTVQFCFLFCCWKAICCNS) is a signal peptide. Cystine bridges form between C21/C69, C35/C84, C38/C122, C46/C100, C50/C102, and C105/C112. 2 N-linked (GlcNAc...) asparagine glycosylation sites follow: N25 and N42.

The protein belongs to the glycoprotein hormones subunit beta family. In terms of assembly, heterodimer. The active follitropin is a heterodimer composed of an alpha chain/CGA shared with other hormones and a unique beta chain/FSHB shown here.

The protein resides in the secreted. Its function is as follows. Together with the alpha chain CGA constitutes follitropin, the follicle-stimulating hormone, and provides its biological specificity to the hormone heterodimer. Binds FSHR, a G protein-coupled receptor, on target cells to activate downstream signaling pathways. Follitropin is involved in follicle development and spermatogenesis in reproductive organs. The chain is Follitropin subunit beta (FSHB) from Aotus nancymaae (Ma's night monkey).